A 195-amino-acid chain; its full sequence is Shikimate kinase (195 aa).

Residue glycine 30 to alanine 35 participates in ATP binding. Threonine 34 contacts Mg(2+). Substrate is bound by residues aspartate 52, arginine 76, and glycine 98. Residue arginine 136 participates in ATP binding. Arginine 155 contributes to the substrate binding site.

It belongs to the shikimate kinase family. In terms of assembly, monomer. Mg(2+) is required as a cofactor.

It localises to the cytoplasm. The enzyme catalyses shikimate + ATP = 3-phosphoshikimate + ADP + H(+). The protein operates within metabolic intermediate biosynthesis; chorismate biosynthesis; chorismate from D-erythrose 4-phosphate and phosphoenolpyruvate: step 5/7. Functionally, catalyzes the specific phosphorylation of the 3-hydroxyl group of shikimic acid using ATP as a cosubstrate. The chain is Shikimate kinase from Ruegeria pomeroyi (strain ATCC 700808 / DSM 15171 / DSS-3) (Silicibacter pomeroyi).